A 139-amino-acid chain; its full sequence is ATP synthase epsilon chain (139 aa).

Belongs to the ATPase epsilon chain family. As to quaternary structure, F-type ATPases have 2 components, CF(1) - the catalytic core - and CF(0) - the membrane proton channel. CF(1) has five subunits: alpha(3), beta(3), gamma(1), delta(1), epsilon(1). CF(0) has three main subunits: a, b and c.

The protein localises to the cell inner membrane. Functionally, produces ATP from ADP in the presence of a proton gradient across the membrane. This chain is ATP synthase epsilon chain, found in Marinomonas sp. (strain MWYL1).